Reading from the N-terminus, the 206-residue chain is Guanylate kinase (206 aa).

Residues 4 to 182 (ANLFIISAPS…AVQNLIHIIS (179 aa)) form the Guanylate kinase-like domain. 11-18 (APSGAGKT) provides a ligand contact to ATP.

The protein belongs to the guanylate kinase family.

It is found in the cytoplasm. It carries out the reaction GMP + ATP = GDP + ADP. Essential for recycling GMP and indirectly, cGMP. The protein is Guanylate kinase of Coxiella burnetii (strain RSA 493 / Nine Mile phase I).